The following is a 151-amino-acid chain: Neuroglobin (151 aa).

Residues 1 to 149 (MERPEQELIR…VVQAMSRGWD (149 aa)) enclose the Globin domain. Heme b-binding residues include His-64 and His-96.

This sequence belongs to the globin family. As to quaternary structure, monomer. Homodimer and homotetramer; disulfide-linked. Mainly monomeric but also detected as part of homodimers and homotetramers. Interacts with 14-3-3 proteins; regulates the phosphorylation of NGB. Could interact (ferrous form) with G-alpha(i) proteins (GTP-bound form). Phosphorylated during hypoxia by ERK1/ERK2. Phosphorylation regulates the heme pocket hexacoordination preventing the association of His-64 with the heme metal center. Thereby, promotes the access of dioxygen and nitrite to the heme and stimulates the nitrite reductase activity. Phosphorylation during hypoxia is stabilized by 14-3-3 proteins.

The protein localises to the cytoplasm. Its subcellular location is the cytosol. It is found in the mitochondrion matrix. The catalysed reaction is Fe(III)-heme b-[protein] + nitric oxide + H2O = Fe(II)-heme b-[protein] + nitrite + 2 H(+). In terms of biological role, monomeric globin with a bis-histidyl six-coordinate heme-iron atom through which it can bind dioxygen, carbon monoxide and nitric oxide. Could help transport oxygen and increase its availability to the metabolically active neuronal tissues, though its low quantity in tissues as well as its high affinity for dioxygen, which may limit its oxygen-releasing ability, argue against it. The ferrous/deoxygenated form exhibits a nitrite reductase activity and it could produce nitric oxide which in turn inhibits cellular respiration in response to hypoxia. In its ferrous/deoxygenated state, it may also exhibit GDI (Guanine nucleotide Dissociation Inhibitor) activity toward heterotrimeric G-alpha proteins, thereby regulating signal transduction to facilitate neuroprotective responses in the wake of hypoxia and associated oxidative stress. The protein is Neuroglobin of Oryctolagus cuniculus (Rabbit).